We begin with the raw amino-acid sequence, 276 residues long: HUWE1-associated protein modifying stress responses 2 (276 aa).

3 disordered regions span residues 146-182 (GKVP…TPVG), 204-238 (ISMR…PNSL), and 252-276 (VRKR…NRMV). A compositionally biased stretch (pro residues) spans 149 to 165 (PPTPQPPRTPRMSPRPP). Low complexity-rich tracts occupy residues 166–179 (AAAS…ESGT) and 208–219 (SGPPGSSSQDGG). Residues 252 to 276 (VRKRTSAQFGDGSADSPLHKRNRMV) are nuclear localization signal.

It belongs to the HAPSTR1 family. In terms of assembly, homooligomer. Heterooligomer with HAPSTR1; the interaction is direct and stabilizes HAPSTR1 independently of HUWE1. Interacts with HUWE1.

The protein resides in the nucleus. Together with HAPSTR1 plays a central regulatory role in the cellular response to molecular stressors, such as DNA damage, nutrient scarcity, and protein misfolding. Regulates these multiple stress response signaling pathways by stabilizing HAPSTR1, but also independently of HAPSTR1. The sequence is that of HUWE1-associated protein modifying stress responses 2 from Mus musculus (Mouse).